Here is a 255-residue protein sequence, read N- to C-terminus: Phosphatidylglycerol--prolipoprotein diacylglyceryl transferase (255 aa).

3 helical membrane-spanning segments follow: residues 15 to 35 (WYGI…NLNC), 46 to 66 (IDVF…YYVV), and 84 to 104 (LGGL…YIVS). Arg-130 provides a ligand contact to a 1,2-diacyl-sn-glycero-3-phospho-(1'-sn-glycerol). 3 helical membrane passes run 169–189 (PTFL…VYIF), 196–216 (GTVI…IEGL), and 228–248 (VAQL…VYLK).

Belongs to the Lgt family.

The protein resides in the cell membrane. The enzyme catalyses L-cysteinyl-[prolipoprotein] + a 1,2-diacyl-sn-glycero-3-phospho-(1'-sn-glycerol) = an S-1,2-diacyl-sn-glyceryl-L-cysteinyl-[prolipoprotein] + sn-glycerol 1-phosphate + H(+). Its pathway is protein modification; lipoprotein biosynthesis (diacylglyceryl transfer). Functionally, catalyzes the transfer of the diacylglyceryl group from phosphatidylglycerol to the sulfhydryl group of the N-terminal cysteine of a prolipoprotein, the first step in the formation of mature lipoproteins. The sequence is that of Phosphatidylglycerol--prolipoprotein diacylglyceryl transferase from Clostridium kluyveri (strain NBRC 12016).